A 365-amino-acid chain; its full sequence is D-alanine--D-alanine ligase (365 aa).

The ATP-grasp domain occupies lysine 156–glutamate 360. Residue lysine 183–glutamate 238 coordinates ATP. Mg(2+)-binding residues include aspartate 315, glutamate 327, and asparagine 329.

Belongs to the D-alanine--D-alanine ligase family. The cofactor is Mg(2+). Mn(2+) is required as a cofactor.

The protein localises to the cytoplasm. It carries out the reaction 2 D-alanine + ATP = D-alanyl-D-alanine + ADP + phosphate + H(+). Its pathway is cell wall biogenesis; peptidoglycan biosynthesis. In terms of biological role, cell wall formation. The sequence is that of D-alanine--D-alanine ligase from Corynebacterium diphtheriae (strain ATCC 700971 / NCTC 13129 / Biotype gravis).